Here is a 428-residue protein sequence, read N- to C-terminus: Serine--tRNA ligase (428 aa).

An L-serine-binding site is contributed by 236 to 238; that stretch reads TAE. 267-269 is an ATP binding site; that stretch reads RSE. Glutamate 290 is an L-serine binding site. Position 354 to 357 (354 to 357) interacts with ATP; the sequence is EISS. Serine 388 provides a ligand contact to L-serine.

Belongs to the class-II aminoacyl-tRNA synthetase family. Type-1 seryl-tRNA synthetase subfamily. In terms of assembly, homodimer. The tRNA molecule binds across the dimer.

It localises to the cytoplasm. The enzyme catalyses tRNA(Ser) + L-serine + ATP = L-seryl-tRNA(Ser) + AMP + diphosphate + H(+). It catalyses the reaction tRNA(Sec) + L-serine + ATP = L-seryl-tRNA(Sec) + AMP + diphosphate + H(+). It functions in the pathway aminoacyl-tRNA biosynthesis; selenocysteinyl-tRNA(Sec) biosynthesis; L-seryl-tRNA(Sec) from L-serine and tRNA(Sec): step 1/1. Functionally, catalyzes the attachment of serine to tRNA(Ser). Is also able to aminoacylate tRNA(Sec) with serine, to form the misacylated tRNA L-seryl-tRNA(Sec), which will be further converted into selenocysteinyl-tRNA(Sec). The protein is Serine--tRNA ligase of Psychrobacter sp. (strain PRwf-1).